Consider the following 350-residue polypeptide: Probable flap endonuclease 1 homolog (350 aa).

Positions 1 to 95 (MGITKLAHLI…AVLEKRAQST (95 aa)) are N-domain. D34 provides a ligand contact to Mg(2+). R61 lines the DNA pocket. Positions 77, 130, 132, 151, and 153 each coordinate Mg(2+). Residues 110–223 (NQECLRLLHL…SRALKLIKEH (114 aa)) form an I-domain region. E130 lines the DNA pocket. DNA is bound by residues G201 and D203. D203 lines the Mg(2+) pocket. Residues 317–325 (RQSRLEDFF) form an interaction with PCNA region.

It belongs to the XPG/RAD2 endonuclease family. FEN1 subfamily. As to quaternary structure, interacts with PCNA. Three molecules of fen1 bind to one PCNA trimer with each molecule binding to one PCNA monomer. PCNA stimulates the nuclease activity without altering cleavage specificity. Mg(2+) serves as cofactor. Post-translationally, phosphorylated. Phosphorylation upon DNA damage induces relocalization to the nuclear plasma.

It is found in the nucleus. The protein localises to the nucleolus. Its subcellular location is the nucleoplasm. It localises to the mitochondrion. In terms of biological role, structure-specific nuclease with 5'-flap endonuclease and 5'-3' exonuclease activities involved in DNA replication and repair. During DNA replication, cleaves the 5'-overhanging flap structure that is generated by displacement synthesis when DNA polymerase encounters the 5'-end of a downstream Okazaki fragment. It enters the flap from the 5'-end and then tracks to cleave the flap base, leaving a nick for ligation. Also involved in the long patch base excision repair (LP-BER) pathway, by cleaving within the apurinic/apyrimidinic (AP) site-terminated flap. Acts as a genome stabilization factor that prevents flaps from equilibrating into structures that lead to duplications and deletions. Also possesses 5'-3' exonuclease activity on nicked or gapped double-stranded DNA, and exhibits RNase H activity. Also involved in replication and repair of rDNA and in repairing mitochondrial DNA. This Danio rerio (Zebrafish) protein is Probable flap endonuclease 1 homolog.